A 690-amino-acid polypeptide reads, in one-letter code: MAKKKSEEHSGADANDSDYQEEPNFEDPPGFVDNISDEDLLGDMLAQRPSEADGVESVVVVDNIPKVEPERLDKLKSVINKLFSNYGDIVNVVYPVDEDGKTKGYAFMEYKQASQAEEAVKKLNNHRLDKNHTFAVNLFTDFQKYENIPEKWEPPTVQTFKVQSDLYNFINDPDTYDQYCVAAETAQNCVQVGFWQNVLPEPFELETRERFTDTFVKWSPLGTYVVTFHKPGVAIWGGSSFQKIQKFPHPGTQFVEFSPCENYLVTYGPTPTGQKIIIWDIRTGAEKRSFVADGMSVLSMFRWSHDDKFVARMGENSIHIYETPSFFLLDLKSIKIPGIRGFSWSPTDNVIAYWVEEQNQIPARVTLMEIPKKREIRNKNLFHVADCKLHWQKSGDYLCVKVDRYSKLKKDKKDLDVKFLGMFYNFEIFHMREKEIPVDSVEIRELILAFAWEPIGNKFSIIHGEPNSSNVSFYEVNKGVKPSLVKRLEKKSCTHLFWSPRGQFIVMANLTMGTFEFVDSTNDYIISASPDHFRASEVEWDPTGRYVVTGVSSWKVKEDTGFNMYTFQGRIIKRTILKNFVQFLWRPRPPTLLSEEKQKEIKKNLKKYYAAFEQKDRLRLTRASKELLEKRSQLRETFMEYRNKRIAEWADQKSRRIMLRGHVDTDNLETDEVDEEIVEFLVKEEVTLLE.

Residues M1–G11 show a composition bias toward basic and acidic residues. The disordered stretch occupies residues M1–S36. The segment covering N15–F25 has biased composition (acidic residues). The RRM domain maps to S57–D141. WD repeat units lie at residues T207 to K246, D293 to L331, I334 to E369, E442 to L484, and P530 to T575. Positions E595–R645 form a coiled coil.

This sequence belongs to the eIF-3 subunit B family. Component of the eukaryotic translation initiation factor 3 (eIF-3) complex. The eIF-3 complex interacts with pix. Interacts with mxt.

The protein resides in the cytoplasm. In terms of biological role, RNA-binding component of the eukaryotic translation initiation factor 3 (eIF-3) complex, which is involved in protein synthesis of a specialized repertoire of mRNAs and, together with other initiation factors, stimulates binding of mRNA and methionyl-tRNAi to the 40S ribosome. The eIF-3 complex specifically targets and initiates translation of a subset of mRNAs involved in cell proliferation. This Drosophila yakuba (Fruit fly) protein is Eukaryotic translation initiation factor 3 subunit B.